The following is a 968-amino-acid chain: MHERHIGPSQEEIDHMLGFLGYKSLDDLMHAALPNGVQSPPDIKIPSHDELTCLTQLAAFAKMNRIKTSMLGQGFYNCITPAVIRRNILENPSWYTSYTPYQPEISQGRLEMLINFQTMICDLTGLEIANASMLDEASCAAEAMLLAKRVSRSSSNKYLVHNGVFPHIRRVLETRADAVGVEIVDLPEGQSIDFDHFGVYAQYQSASGKLLDLRPLFSRSKRAGAICVIGCDLLMLTLFTSPGELGADIAFGSAQRFGIPMNFGGPLASFLAARKAMERSLPGRLVGVSVDADSNHAYRLTLQTREQHIRREKATSNICTATVLMAIAAVAFAQHHGPKGLRAIAHRINTVAVGFARLLKQTAFRVSSLDIFDTIEINNPTQVCVEAESKYDLLFWKVDDNKLRITFDEVTARLDGDLPERLSKVFGISPDKIRDLGCNYDSCDCSFYGDLQQAREGLSSVASRNISVHSDLARHPLRRFSGYLKHPVFNNYTGEVALMRYLKALSDKDFALDRGMIPLGSCTMKLNAAFQLEPVLWPEFANLHPFAPLGDADGTLQIIDQIETWLANLSGYDAVSLQPTAGSQGELAGLLAIRGYYKSLNLDRDVCLIPASAHGTNAASAVLAGMRVVVVACDQQGNIDLDDLRLKASKNAHALAALMVTYPSTHGVYEDNISEVCSVVHKYGGQVYVDGANSNALIGYLRTGDFGGDVSHLNLHKTFGIPHGGGGPGIGPVVAKAHLAPFLPFRNRVHKPSTDLPAVKHMGGPIASSDYGFAGALYISWAYIFCLGSQGMKRCTAVAVLVANYIAKQLSDTFPVLYTGKNNLVAHEFIMDFREVTRVSGITVDDVCKRLIDYGFHAPTMSFPVPGTLMVEPTESEPFSEIQRFIKTIRSIRAEIDRVIDKTYDPDNNPLKRAPHTLEQIASDKWDRPYSRRTGIVYTSGKYWPASARIDNAYGDRNIFCTCPDLPD.

Lys717 carries the post-translational modification N6-(pyridoxal phosphate)lysine.

This sequence belongs to the GcvP family. The glycine cleavage system is composed of four proteins: P, T, L and H. Pyridoxal 5'-phosphate serves as cofactor.

The enzyme catalyses N(6)-[(R)-lipoyl]-L-lysyl-[glycine-cleavage complex H protein] + glycine + H(+) = N(6)-[(R)-S(8)-aminomethyldihydrolipoyl]-L-lysyl-[glycine-cleavage complex H protein] + CO2. Its function is as follows. The glycine cleavage system catalyzes the degradation of glycine. The P protein binds the alpha-amino group of glycine through its pyridoxal phosphate cofactor; CO(2) is released and the remaining methylamine moiety is then transferred to the lipoamide cofactor of the H protein. The sequence is that of Glycine dehydrogenase (decarboxylating) from Tropheryma whipplei (strain TW08/27) (Whipple's bacillus).